The primary structure comprises 181 residues: ATP synthase subunit delta (181 aa).

This sequence belongs to the ATPase delta chain family. In terms of assembly, F-type ATPases have 2 components, F(1) - the catalytic core - and F(0) - the membrane proton channel. F(1) has five subunits: alpha(3), beta(3), gamma(1), delta(1), epsilon(1). F(0) has three main subunits: a(1), b(2) and c(10-14). The alpha and beta chains form an alternating ring which encloses part of the gamma chain. F(1) is attached to F(0) by a central stalk formed by the gamma and epsilon chains, while a peripheral stalk is formed by the delta and b chains.

The protein resides in the cell inner membrane. F(1)F(0) ATP synthase produces ATP from ADP in the presence of a proton or sodium gradient. F-type ATPases consist of two structural domains, F(1) containing the extramembraneous catalytic core and F(0) containing the membrane proton channel, linked together by a central stalk and a peripheral stalk. During catalysis, ATP synthesis in the catalytic domain of F(1) is coupled via a rotary mechanism of the central stalk subunits to proton translocation. Functionally, this protein is part of the stalk that links CF(0) to CF(1). It either transmits conformational changes from CF(0) to CF(1) or is implicated in proton conduction. In Chlorobium phaeovibrioides (strain DSM 265 / 1930) (Prosthecochloris vibrioformis (strain DSM 265)), this protein is ATP synthase subunit delta.